We begin with the raw amino-acid sequence, 216 residues long: CRIB domain-containing protein RIC7 (216 aa).

A CRIB domain is found at 36 to 49; that stretch reads IGNPTDVKHVAHIG. The tract at residues 52 to 216 is disordered; that stretch reads GPSDNATAPS…PQFEDDRNGF (165 aa). Residues 108–121 show a composition bias toward basic and acidic residues; sequence SSSEKGSPTKERSD.

As to quaternary structure, interacts with ARAC4/ROP2 and ARAC11/ROP1. In terms of tissue distribution, expressed in roots, leaves, guard cells, stems, flowers, siliques and pollen.

It is found in the nucleus. Its subcellular location is the cytoplasm. The protein resides in the cell membrane. In terms of biological role, functions as a downstream effector of Rho-related GTP binding proteins of the 'Rho of Plants' (ROPs) family. Participates in the propagation of ROP GTPase signals in specific cellular responses. Functions as a downstream effector of active ARAC4/ROP2 GTPase which is involved in the prevention of excessive stomatal opening upon light stimulation. Is involved in pollen tube growth regulation through its interaction with ARAC11/ROP1. The protein is CRIB domain-containing protein RIC7 (RIC7) of Arabidopsis thaliana (Mouse-ear cress).